A 105-amino-acid chain; its full sequence is Probable molt-inhibiting hormone (105 aa).

Positions 1-28 (MYRMPMRFWLTAVVMVVVGALLLDTASA) are cleaved as a signal peptide. 3 disulfide bridges follow: Cys35–Cys72, Cys52–Cys68, and Cys55–Cys81.

It belongs to the arthropod CHH/MIH/GIH/VIH hormone family. As to expression, expressed in the postmolt, intermolt, and premolt stages of the shrimp eyestalks and the brain.

The protein resides in the secreted. Inhibits Y-organs where molting hormone (ecdysteroid) is secreted. A molting cycle is initiated when MIH secretion diminishes or stops. This is Probable molt-inhibiting hormone from Metapenaeus ensis (Greasyback shrimp).